The sequence spans 379 residues: Flap endonuclease 1 (379 aa).

An N-domain region spans residues 1-105 (MGVKGLNQLI…GELEKRLLRR (105 aa)). Asp-34 provides a ligand contact to Mg(2+). Positions 47 and 71 each coordinate DNA. The Mg(2+) site is built by Asp-87, Glu-159, Glu-161, Asp-180, and Asp-182. An I-domain region spans residues 123–254 (DMVRYEKRTV…VTAFKLIKEH (132 aa)). Position 159 (Glu-159) interacts with DNA. DNA is bound by residues Gly-232 and Asp-234. Asp-234 lines the Mg(2+) pocket. Positions 341–349 (VQGRLDGFF) are interaction with PCNA. Residues 344–379 (RLDGFFQSVPKPKDSADKKRKNDTKSAKSKKAKTRK) form a disordered region. Basic residues predominate over residues 361–379 (KKRKNDTKSAKSKKAKTRK).

It belongs to the XPG/RAD2 endonuclease family. FEN1 subfamily. As to quaternary structure, interacts with PCNA. Three molecules of FEN1 bind to one PCNA trimer with each molecule binding to one PCNA monomer. PCNA stimulates the nuclease activity without altering cleavage specificity. Requires Mg(2+) as cofactor. In terms of processing, phosphorylated. Phosphorylation upon DNA damage induces relocalization to the nuclear plasma.

The protein localises to the nucleus. It is found in the nucleolus. It localises to the nucleoplasm. The protein resides in the mitochondrion. Functionally, structure-specific nuclease with 5'-flap endonuclease and 5'-3' exonuclease activities involved in DNA replication and repair. During DNA replication, cleaves the 5'-overhanging flap structure that is generated by displacement synthesis when DNA polymerase encounters the 5'-end of a downstream Okazaki fragment. It enters the flap from the 5'-end and then tracks to cleave the flap base, leaving a nick for ligation. Also involved in the long patch base excision repair (LP-BER) pathway, by cleaving within the apurinic/apyrimidinic (AP) site-terminated flap. Acts as a genome stabilization factor that prevents flaps from equilibrating into structures that lead to duplications and deletions. Also possesses 5'-3' exonuclease activity on nicked or gapped double-stranded DNA, and exhibits RNase H activity. Also involved in replication and repair of rDNA and in repairing mitochondrial DNA. This Debaryomyces hansenii (strain ATCC 36239 / CBS 767 / BCRC 21394 / JCM 1990 / NBRC 0083 / IGC 2968) (Yeast) protein is Flap endonuclease 1.